A 372-amino-acid polypeptide reads, in one-letter code: MSDKINLMNLTRQQMRAFFQELGEKPFRADQLVKWIYHFGEDNFDHMTNINKKLREKLKTVAEIKAPEIAVEQRSADGTIKWAMQVGDQQVETVYIPETDRATLCVSSQVGCALACTFCSTAQQGFNRNLTVSEIIGQVWRASKIIGNFGVTGVRPITNVVMMGMGEPLLNVANVVPAMEIMLDDFAYGLSKRRVTLSTSGVVPALDKLSEMIDVALAISLHAPNDELRNEIVPINKKYNIKMLMESVNRYLNVSNANHGKVTIEYVMLDHINDGTEHAHQLAEVLKNTPCKINLIPWNPFPDAPYAKSSNTRIDRFQKTLMEYGFTVILRKTRGDDIDAACGQLAGDVIDRTKRTAQKKRFGKEIGTHQIY.

The Proton acceptor role is filled by Glu-92. Positions Glu-98–Asp-337 constitute a Radical SAM core domain. Cys-105 and Cys-342 are joined by a disulfide. Residues Cys-112, Cys-116, and Cys-119 each coordinate [4Fe-4S] cluster. Residues Gly-166 to Glu-167, Ser-198, Ser-220 to His-222, and Asn-299 contribute to the S-adenosyl-L-methionine site. Cys-342 functions as the S-methylcysteine intermediate in the catalytic mechanism.

It belongs to the radical SAM superfamily. RlmN family. Requires [4Fe-4S] cluster as cofactor.

Its subcellular location is the cytoplasm. It catalyses the reaction adenosine(2503) in 23S rRNA + 2 reduced [2Fe-2S]-[ferredoxin] + 2 S-adenosyl-L-methionine = 2-methyladenosine(2503) in 23S rRNA + 5'-deoxyadenosine + L-methionine + 2 oxidized [2Fe-2S]-[ferredoxin] + S-adenosyl-L-homocysteine. It carries out the reaction adenosine(37) in tRNA + 2 reduced [2Fe-2S]-[ferredoxin] + 2 S-adenosyl-L-methionine = 2-methyladenosine(37) in tRNA + 5'-deoxyadenosine + L-methionine + 2 oxidized [2Fe-2S]-[ferredoxin] + S-adenosyl-L-homocysteine. Specifically methylates position 2 of adenine 2503 in 23S rRNA and position 2 of adenine 37 in tRNAs. m2A2503 modification seems to play a crucial role in the proofreading step occurring at the peptidyl transferase center and thus would serve to optimize ribosomal fidelity. The sequence is that of Dual-specificity RNA methyltransferase RlmN from Histophilus somni (strain 129Pt) (Haemophilus somnus).